A 124-amino-acid polypeptide reads, in one-letter code: Non-structural protein 2 (124 aa).

A DLNP; interaction with MAP1B motif is present at residues 121-124 (DLNP).

Belongs to the pneumovirus non-structural protein 2 family. Monomer (instable). Homomultimer. Heteromultimer with NS1. Interacts with host RIGI (via N-terminus); this interaction prevents host signaling pathway involved in interferon production. Interacts with host MAP1B/microtubule-associated protein 1B.

It is found in the host mitochondrion. In terms of biological role, plays a major role in antagonizing the type I IFN-mediated antiviral response. Acts cooperatively with NS1 to repress activation and nuclear translocation of host IFN-regulatory factor IRF3. Interacts with the host cytoplasmic sensor of viral nucleic acids RIGI and prevents the interaction with its downstream partner MAVS. Together with NS2, participates in the proteasomal degradation of host STAT2, IRF3, IRF7, TBK1 and RIGI through a NS-degradasome involving CUL2 and Elongin-C. The degradasome requires an intact mitochondrial MAVS. Induces host SOCS1 expression. Induces activation of NF-kappa-B. Suppresses premature apoptosis by an NF-kappa-B-dependent, interferon-independent mechanism promoting continued viral replication. The chain is Non-structural protein 2 (1B) from Human respiratory syncytial virus A (strain A2).